Here is a 373-residue protein sequence, read N- to C-terminus: Forkhead box protein E1 (373 aa).

A disordered region spans residues Lys-19–Arg-51. The segment covering Gly-41–Gln-50 has biased composition (basic residues). Positions Lys-53 to Lys-147 form a DNA-binding region, fork-head.

Phosphorylated. In terms of tissue distribution, detected in adult brain, placenta, lung, liver, skeletal muscle, kidney, pancreas, heart, colon, small intestine testis and thymus. Expression was strongest in heart and pancreas.

It is found in the nucleus. Its function is as follows. Transcription factor that binds consensus sites on a variety of gene promoters and activate their transcription. Involved in proper palate formation, most probably through the expression of MSX1 and TGFB3 genes which are direct targets of this transcription factor. Also implicated in thyroid gland morphogenesis. May indirectly play a role in cell growth and migration through the regulation of WNT5A expression. In Homo sapiens (Human), this protein is Forkhead box protein E1 (FOXE1).